The chain runs to 344 residues: Putative replication factor C small subunit L499 (344 aa).

57 to 64 (GPSGSGKT) contributes to the ATP binding site.

It belongs to the activator 1 small subunits family. RfcS subfamily.

Functionally, part of the RFC clamp loader complex which loads the PCNA sliding clamp onto DNA. This chain is Putative replication factor C small subunit L499, found in Acanthamoeba polyphaga mimivirus (APMV).